A 677-amino-acid polypeptide reads, in one-letter code: Methionine--tRNA ligase (677 aa).

Residues 15–25 (PYANGSIHLGH) carry the 'HIGH' region motif. Residues C146, C149, C159, and C162 each contribute to the Zn(2+) site. The 'KMSKS' region signature appears at 333–337 (KMSKS). K336 provides a ligand contact to ATP. Residues 575 to 677 (DFAKIDLRVA…DGAKPGQQVK (103 aa)) form the tRNA-binding domain.

The protein belongs to the class-I aminoacyl-tRNA synthetase family. MetG type 1 subfamily. Homodimer. The cofactor is Zn(2+).

Its subcellular location is the cytoplasm. It carries out the reaction tRNA(Met) + L-methionine + ATP = L-methionyl-tRNA(Met) + AMP + diphosphate. Its function is as follows. Is required not only for elongation of protein synthesis but also for the initiation of all mRNA translation through initiator tRNA(fMet) aminoacylation. This Salmonella choleraesuis (strain SC-B67) protein is Methionine--tRNA ligase.